Consider the following 566-residue polypeptide: Putative sensory transducer protein YvaQ (566 aa).

Residues 1–31 form the signal peptide; that stretch reads MRLTISRKFSLVFLTLILINLLVGGIGVLNM. Residues 74–110 are a coiled coil; sequence DKSKMDTLDQEMNQIMEDINQKLDNYEKTISTDKEQK. The helical transmembrane segment at 186 to 206 threads the bilayer; sequence IYTALLVAASILISIFIWLYI. Positions 208 to 261 constitute an HAMP domain; it reads RNIVKPIIRMKESANHIAEGDLSNDMEALNSKDELGDLNEALQKMVGNLRDIVG. The Methyl-accepting transducer domain maps to 280–530; that stretch reads ATNETRSGSK…ESAAGIEETF (251 aa). The stretch at 536 to 566 forms a coiled coil; that stretch reads SAHSMDQVLLNAEELEQLANELNEKMGQFTI.

This sequence belongs to the methyl-accepting chemotaxis (MCP) protein family.

The protein localises to the cell membrane. Its function is as follows. Chemotactic-signal transducers respond to changes in the concentration of attractants and repellents in the environment, transduce a signal from the outside to the inside of the cell, and facilitate sensory adaptation through the variation of the level of methylation. Attractants increase the level of methylation while repellents decrease the level of methylation. This is Putative sensory transducer protein YvaQ (yvaQ) from Bacillus subtilis (strain 168).